The primary structure comprises 295 residues: Small ribosomal subunit protein uS2 (295 aa).

The segment at 263–295 (KKFSKTKNIDEETNTEFEKALNDADENKNSDNA) is disordered. Basic and acidic residues predominate over residues 278-295 (EFEKALNDADENKNSDNA).

Belongs to the universal ribosomal protein uS2 family.

The sequence is that of Small ribosomal subunit protein uS2 from Rickettsia peacockii (strain Rustic).